Here is a 1324-residue protein sequence, read N- to C-terminus: Probable phosphoribosylformylglycinamidine synthase (1324 aa).

Residues 314 to 325 (GATTGTGGRIRD), 394 to 396 (SGF), and Ala681 contribute to the ATP site. 4 residues coordinate Mg(2+): Asp682, Glu721, Asn725, and Asp894. Residue Ser896 coordinates ATP. In terms of domain architecture, Glutamine amidotransferase type-1 spans 1053 to 1295 (RVAIIREEGS…LTWQWAESSE (243 aa)). Cys1146 acts as the Nucleophile in catalysis. Catalysis depends on residues His1280 and Asp1282.

The protein in the N-terminal section; belongs to the FGAMS family.

The protein localises to the cytoplasm. It catalyses the reaction N(2)-formyl-N(1)-(5-phospho-beta-D-ribosyl)glycinamide + L-glutamine + ATP + H2O = 2-formamido-N(1)-(5-O-phospho-beta-D-ribosyl)acetamidine + L-glutamate + ADP + phosphate + H(+). The protein operates within purine metabolism; IMP biosynthesis via de novo pathway; 5-amino-1-(5-phospho-D-ribosyl)imidazole from N(2)-formyl-N(1)-(5-phospho-D-ribosyl)glycinamide: step 1/2. In terms of biological role, phosphoribosylformylglycinamidine synthase involved in the purines biosynthetic pathway. Catalyzes the ATP-dependent conversion of formylglycinamide ribonucleotide (FGAR) and glutamine to yield formylglycinamidine ribonucleotide (FGAM) and glutamate. The polypeptide is Probable phosphoribosylformylglycinamidine synthase (Caenorhabditis elegans).